We begin with the raw amino-acid sequence, 112 residues long: UPF0235 protein RHE_CH03912 (112 aa).

Belongs to the UPF0235 family.

This Rhizobium etli (strain ATCC 51251 / DSM 11541 / JCM 21823 / NBRC 15573 / CFN 42) protein is UPF0235 protein RHE_CH03912.